Reading from the N-terminus, the 286-residue chain is tRNA (guanine-N(7)-)-methyltransferase (286 aa).

S-adenosyl-L-methionine-binding residues include Glu-91, Glu-116, Asn-143, and Asp-165. Asp-165 is an active-site residue. Residues Lys-169, Asp-201, and Thr-262–Glu-265 contribute to the substrate site.

It belongs to the class I-like SAM-binding methyltransferase superfamily. TrmB family.

It carries out the reaction guanosine(46) in tRNA + S-adenosyl-L-methionine = N(7)-methylguanosine(46) in tRNA + S-adenosyl-L-homocysteine. Its pathway is tRNA modification; N(7)-methylguanine-tRNA biosynthesis. In terms of biological role, catalyzes the formation of N(7)-methylguanine at position 46 (m7G46) in tRNA. The sequence is that of tRNA (guanine-N(7)-)-methyltransferase from Bifidobacterium longum subsp. infantis (strain ATCC 15697 / DSM 20088 / JCM 1222 / NCTC 11817 / S12).